A 72-amino-acid chain; its full sequence is V-type proton ATPase subunit e (72 aa).

Topologically, residues 1-2 (MS) are lumenal. The chain crosses the membrane as a helical span at residues 3-23 (FYTVVATFLSVVLASAVFWVL). Topologically, residues 24–34 (APKENQTVWRS) are cytoplasmic. A helical membrane pass occupies residues 35–55 (TIILSMSMMFLMWAVTYLSQL). Over 56-72 (HPLVVPRRSDLRPEFAE) the chain is Lumenal.

It belongs to the V-ATPase e1/e2 subunit family. As to quaternary structure, V-ATPase is a heteromultimeric enzyme composed of a peripheral catalytic V1 complex (components A to H) attached to an integral membrane V0 proton pore complex (components: a, c, c', c'', d, e, f and VOA1).

The protein localises to the vacuole membrane. In terms of biological role, subunit of the V0 complex of vacuolar(H+)-ATPase (V-ATPase), a multisubunit enzyme composed of a peripheral complex (V1) that hydrolyzes ATP and a membrane integral complex (V0) that translocates protons. V-ATPase is responsible for acidifying and maintaining the pH of intracellular compartments. The sequence is that of V-type proton ATPase subunit e (VMA9) from Eremothecium gossypii (strain ATCC 10895 / CBS 109.51 / FGSC 9923 / NRRL Y-1056) (Yeast).